Reading from the N-terminus, the 181-residue chain is Ion-translocating oxidoreductase complex subunit B (181 aa).

The interval 1–26 is hydrophobic; that stretch reads MLEAVSAVMSLGGMALFAGLGLGYAA. The region spanning 32 to 90 is the 4Fe-4S domain; sequence EADPVVEKLEALLPATNCGMCGHPGCGPYAQAITEGEAINLCTPGGKAVMESIAAMLGV. C49, C52, C57, C73, C110, C113, C116, C120, C140, C143, C146, and C150 together coordinate [4Fe-4S] cluster. 4Fe-4S ferredoxin-type domains follow at residues 101–130 and 131–160; these read KVAY…GANK and QSHT…MQPV.

Belongs to the 4Fe4S bacterial-type ferredoxin family. RnfB subfamily. As to quaternary structure, the complex is composed of six subunits: RnfA, RnfB, RnfC, RnfD, RnfE and RnfG. [4Fe-4S] cluster is required as a cofactor.

Its subcellular location is the cell inner membrane. Its function is as follows. Part of a membrane-bound complex that couples electron transfer with translocation of ions across the membrane. In Magnetococcus marinus (strain ATCC BAA-1437 / JCM 17883 / MC-1), this protein is Ion-translocating oxidoreductase complex subunit B.